A 288-amino-acid chain; its full sequence is 4-hydroxybenzoate octaprenyltransferase (288 aa).

Helical transmembrane passes span 23–43, 46–66, 98–118, 141–161, 165–185, 213–233, 234–254, and 268–288; these read IGSLLLLWPTLWALWLAGKGI, TKILIVFVLGVFFMRAAGCVV, ILFVVLVLLSFGLVLTLNSMT, LPQVVLGAAFGWSIPMGFAAV, LPLVCWLLLLANICWTVAYDT, LIIGLLQLATLVLMVTIGWLM, NLGGAFYWSILLAGALFVHQQ, and AFLNNNYVGLVLFLGIFISYL.

The protein belongs to the UbiA prenyltransferase family. Mg(2+) is required as a cofactor.

It localises to the cell inner membrane. It carries out the reaction all-trans-octaprenyl diphosphate + 4-hydroxybenzoate = 4-hydroxy-3-(all-trans-octaprenyl)benzoate + diphosphate. It participates in cofactor biosynthesis; ubiquinone biosynthesis. In terms of biological role, catalyzes the prenylation of para-hydroxybenzoate (PHB) with an all-trans polyprenyl group. Mediates the second step in the final reaction sequence of ubiquinone-8 (UQ-8) biosynthesis, which is the condensation of the polyisoprenoid side chain with PHB, generating the first membrane-bound Q intermediate 3-octaprenyl-4-hydroxybenzoate. The protein is 4-hydroxybenzoate octaprenyltransferase of Yersinia enterocolitica serotype O:8 / biotype 1B (strain NCTC 13174 / 8081).